The sequence spans 169 residues: Short form salivary protein D7R3 (169 aa).

Residues 1–21 (MFGKLLPCAILVWCLFSLGQA) form the signal peptide. 3 disulfides stabilise this stretch: Cys30-Cys62, Cys43-Cys168, and Cys101-Cys120. Noradrenaline is bound by residues Glu31 and Arg46. Residue Glu31 coordinates serotonin. His59, Tyr118, Asp135, and Glu138 together coordinate serotonin. Histamine-binding residues include Tyr118, Asp135, and Glu138. The noradrenaline site is built by Asp135 and Glu138.

This sequence belongs to the PBP/GOBP family. As to expression, female saliva (at protein level). Female salivary gland. Low-level expression in female carcass without salivary glands. Not detected in male tissues.

The protein localises to the secreted. Its function is as follows. Modulates blood feeding of female mosquitoes on vertebrate species by binding and sequestering different mediators involved in the host response. Binds serotonin, noradrenaline, histamine and adrenaline. Inhibits histamine-, serotonin- and noradrenaline-induced smooth muscle contraction. Exhibits vasodilating activity. In Anopheles gambiae (African malaria mosquito), this protein is Short form salivary protein D7R3.